Consider the following 321-residue polypeptide: GTP cyclohydrolase FolE2 (321 aa).

This sequence belongs to the GTP cyclohydrolase IV family.

It carries out the reaction GTP + H2O = 7,8-dihydroneopterin 3'-triphosphate + formate + H(+). The protein operates within cofactor biosynthesis; 7,8-dihydroneopterin triphosphate biosynthesis; 7,8-dihydroneopterin triphosphate from GTP: step 1/1. Its function is as follows. Converts GTP to 7,8-dihydroneopterin triphosphate. This chain is GTP cyclohydrolase FolE2, found in Paracoccus denitrificans (strain Pd 1222).